Consider the following 175-residue polypeptide: uncharacterized protein (175 aa).

The span at 1-17 shows a compositional bias: basic and acidic residues; sequence MKVEGGESMHESEEGRD. The segment at 1-21 is disordered; the sequence is MKVEGGESMHESEEGRDVPNG.

This is an uncharacterized protein from Bacillus thuringiensis subsp. kurstaki.